We begin with the raw amino-acid sequence, 709 residues long: Protein white (709 aa).

A disordered region spans residues 1-35 (MTINTDDQYADGESKTTISSNRRYSTSSFQDQSME). The segment covering 15–32 (KTTISSNRRYSTSSFQDQ) has biased composition (polar residues). Residues 103–348 (FTRQRLVKDF…SQLGIPCPPN (246 aa)) enclose the ABC transporter domain. ATP contacts are provided by residues 136-143 (GSSGAGKT) and 292-299 (GMAMKGKT). A helical membrane pass occupies residues 457–475 (LLQTAMVASLIGSIYFGQV). The N-linked (GlcNAc...) asparagine glycan is linked to N485. 4 helical membrane passes run 487–507 (SLFLFLTNMTFQNVFAVINVF), 537–555 (LPLFIAVPFVFTSITYPMI), 564–585 (YLTTLFIVTLVANVSTSFGYLI), and 598–616 (VGPPVVIPFLIFGGFFLNS). Residue N658 is glycosylated (N-linked (GlcNAc...) asparagine). Residues 681–700 (LDIGCLFALIVLFRLGALFC) traverse the membrane as a helical segment.

It belongs to the ABC transporter superfamily. ABCG family. Eye pigment precursor importer (TC 3.A.1.204) subfamily.

Its subcellular location is the membrane. Its function is as follows. May be part of a membrane-spanning permease system necessary for the transport of pigment precursors into pigment cells responsible for eye color. In Anopheles albimanus (New world malaria mosquito), this protein is Protein white (W).